Here is a 228-residue protein sequence, read N- to C-terminus: Thermonuclease (228 aa).

The first 23 residues, 1–23 (MTEYLLSAGICMAIVSILLIGMA), serve as a signal peptide directing secretion. Residues 24-60 (ISNVSKEQYAKRFFFFATSCLVLTLVVASSLSSSANA) constitute a propeptide that is removed on maturation. Asp100 contributes to the Ca(2+) binding site. The active site involves Arg114. Ca(2+) contacts are provided by Asp119 and Thr120. Residues Glu122 and Arg166 contribute to the active site.

It belongs to the thermonuclease family. It depends on Ca(2+) as a cofactor.

It is found in the secreted. It catalyses the reaction Endonucleolytic cleavage to nucleoside 3'-phosphates and 3'-phosphooligonucleotide end-products.. Its function is as follows. Enzyme that catalyzes the hydrolysis of both DNA and RNA at the 5' position of the phosphodiester bond. This chain is Thermonuclease (nuc), found in Staphylococcus aureus (strain MRSA252).